The chain runs to 62 residues: Large ribosomal subunit protein uL30 (62 aa).

This sequence belongs to the universal ribosomal protein uL30 family. Part of the 50S ribosomal subunit.

The polypeptide is Large ribosomal subunit protein uL30 (Halalkalibacterium halodurans (strain ATCC BAA-125 / DSM 18197 / FERM 7344 / JCM 9153 / C-125) (Bacillus halodurans)).